A 661-amino-acid polypeptide reads, in one-letter code: UvrABC system protein C (661 aa).

Residues Ala25 to Val104 enclose the GIY-YIG domain. Residues Asp214 to Leu249 form the UVR domain. Over residues Phe636–Leu652 the composition is skewed to basic and acidic residues. The tract at residues Phe636–Ala661 is disordered.

Belongs to the UvrC family. In terms of assembly, interacts with UvrB in an incision complex.

The protein resides in the cytoplasm. Its function is as follows. The UvrABC repair system catalyzes the recognition and processing of DNA lesions. UvrC both incises the 5' and 3' sides of the lesion. The N-terminal half is responsible for the 3' incision and the C-terminal half is responsible for the 5' incision. The chain is UvrABC system protein C from Synechococcus sp. (strain CC9605).